The following is a 152-amino-acid chain: Snaclec coagulation factor IX/factor X-binding protein subunit A (152 aa).

The signal sequence occupies residues 1–23 (MGRFIFLSFGLLVVFLSLSGTGA). 3 disulfide bridges follow: C25–C36, C53–C150, and C125–C142. Residues 32 to 151 (YEGHCYNIFH…CGERNPFVCE (120 aa)) form the C-type lectin domain. Ca(2+) contacts are provided by S64, E66, and E70. Residue E151 coordinates Ca(2+).

Belongs to the snaclec family. Heterodimer of subunits A and B; disulfide-linked. Expressed by the venom gland.

It is found in the secreted. In terms of biological role, anticoagulant protein which binds to the gamma-carboxyglutamic acid-domain regions of factors IX (F9) and factor X (F10) in the presence of calcium with a 1 to 1 stoichiometry. In Gloydius halys (Chinese water mocassin), this protein is Snaclec coagulation factor IX/factor X-binding protein subunit A.